Consider the following 333-residue polypeptide: Acetyltransferase Pat (333 aa).

3',5'-cyclic AMP contacts are provided by residues 85 to 88 (GEIA), 95 to 96 (RT), and Arg135. Residues 153-317 (FYLRPVLPGD…DTVPFEPELI (165 aa)) enclose the N-acetyltransferase domain. Residue Glu211 coordinates Mg(2+). Substrate contacts are provided by residues 237–239 (FTV), 245–250 (GRGIGS), Asn276, and Arg285.

Homodimer. Mg(2+) serves as cofactor.

Its activity is regulated as follows. Allosterically regulated by cAMP. Catalyzes specifically the acetylation of the epsilon-amino group of a highly conserved lysine residue in acetyl-CoA synthetase (ACS) and of the universal stress protein (USP) MSMEG_4207. Acetylation results in the inactivation of ACS activity and could be important for mycobacteria to adjust to environmental changes. The polypeptide is Acetyltransferase Pat (Mycolicibacterium smegmatis (strain ATCC 700084 / mc(2)155) (Mycobacterium smegmatis)).